Reading from the N-terminus, the 284-residue chain is Formamidopyrimidine-DNA glycosylase (284 aa).

The active-site Schiff-base intermediate with DNA is P2. E3 functions as the Proton donor in the catalytic mechanism. The active-site Proton donor; for beta-elimination activity is K61. DNA is bound by residues H95, R114, and R159. The FPG-type zinc finger occupies 244 to 278 (WVYGRKGQPCRVCNTPIERIRLAGRSTHFCPTCQR). Catalysis depends on R268, which acts as the Proton donor; for delta-elimination activity.

It belongs to the FPG family. As to quaternary structure, monomer. Requires Zn(2+) as cofactor.

The catalysed reaction is Hydrolysis of DNA containing ring-opened 7-methylguanine residues, releasing 2,6-diamino-4-hydroxy-5-(N-methyl)formamidopyrimidine.. It catalyses the reaction 2'-deoxyribonucleotide-(2'-deoxyribose 5'-phosphate)-2'-deoxyribonucleotide-DNA = a 3'-end 2'-deoxyribonucleotide-(2,3-dehydro-2,3-deoxyribose 5'-phosphate)-DNA + a 5'-end 5'-phospho-2'-deoxyribonucleoside-DNA + H(+). Its function is as follows. Involved in base excision repair of DNA damaged by oxidation or by mutagenic agents. Acts as a DNA glycosylase that recognizes and removes damaged bases. Has a preference for oxidized purines, such as 7,8-dihydro-8-oxoguanine (8-oxoG). Has AP (apurinic/apyrimidinic) lyase activity and introduces nicks in the DNA strand. Cleaves the DNA backbone by beta-delta elimination to generate a single-strand break at the site of the removed base with both 3'- and 5'-phosphates. In Gloeobacter violaceus (strain ATCC 29082 / PCC 7421), this protein is Formamidopyrimidine-DNA glycosylase.